The sequence spans 607 residues: Aspartate--tRNA(Asp/Asn) ligase (607 aa).

Residue E194 coordinates L-aspartate. The tract at residues Q218–K221 is aspartate. L-aspartate is bound at residue R240. Residues R240 to E242 and Q249 contribute to the ATP site. Position 468 (H468) interacts with L-aspartate. E502 provides a ligand contact to ATP. Residue R509 coordinates L-aspartate. G554 to R557 serves as a coordination point for ATP.

Belongs to the class-II aminoacyl-tRNA synthetase family. Type 1 subfamily. As to quaternary structure, homodimer.

The protein localises to the cytoplasm. It catalyses the reaction tRNA(Asx) + L-aspartate + ATP = L-aspartyl-tRNA(Asx) + AMP + diphosphate. Its function is as follows. Aspartyl-tRNA synthetase with relaxed tRNA specificity since it is able to aspartylate not only its cognate tRNA(Asp) but also tRNA(Asn). Reaction proceeds in two steps: L-aspartate is first activated by ATP to form Asp-AMP and then transferred to the acceptor end of tRNA(Asp/Asn). The sequence is that of Aspartate--tRNA(Asp/Asn) ligase from Desulfotalea psychrophila (strain LSv54 / DSM 12343).